The following is a 650-amino-acid chain: Acetyl-coenzyme A synthetase (650 aa).

Residues Arg191–Arg194, Thr311, and Asn335 contribute to the CoA site. ATP-binding positions include Gly387–Pro389, Asp411–Thr416, Asp500, and Arg515. Ser523 serves as a coordination point for CoA. Arg526 serves as a coordination point for ATP. Residues Val537, His539, and Val542 each contribute to the Mg(2+) site. Residue Arg584 coordinates CoA. Lys609 carries the N6-acetyllysine modification.

This sequence belongs to the ATP-dependent AMP-binding enzyme family. Mg(2+) is required as a cofactor. In terms of processing, acetylated. Deacetylation by the SIR2-homolog deacetylase activates the enzyme.

It catalyses the reaction acetate + ATP + CoA = acetyl-CoA + AMP + diphosphate. Its function is as follows. Catalyzes the conversion of acetate into acetyl-CoA (AcCoA), an essential intermediate at the junction of anabolic and catabolic pathways. AcsA undergoes a two-step reaction. In the first half reaction, AcsA combines acetate with ATP to form acetyl-adenylate (AcAMP) intermediate. In the second half reaction, it can then transfer the acetyl group from AcAMP to the sulfhydryl group of CoA, forming the product AcCoA. The sequence is that of Acetyl-coenzyme A synthetase from Shewanella baltica (strain OS195).